Here is a 258-residue protein sequence, read N- to C-terminus: Deoxyribose-phosphate aldolase (258 aa).

The active-site Proton donor/acceptor is the D101. K166 serves as the catalytic Schiff-base intermediate with acetaldehyde. The active-site Proton donor/acceptor is the K200.

This sequence belongs to the DeoC/FbaB aldolase family. DeoC type 2 subfamily.

The protein localises to the cytoplasm. The catalysed reaction is 2-deoxy-D-ribose 5-phosphate = D-glyceraldehyde 3-phosphate + acetaldehyde. The protein operates within carbohydrate degradation; 2-deoxy-D-ribose 1-phosphate degradation; D-glyceraldehyde 3-phosphate and acetaldehyde from 2-deoxy-alpha-D-ribose 1-phosphate: step 2/2. In terms of biological role, catalyzes a reversible aldol reaction between acetaldehyde and D-glyceraldehyde 3-phosphate to generate 2-deoxy-D-ribose 5-phosphate. The chain is Deoxyribose-phosphate aldolase from Actinobacillus pleuropneumoniae serotype 3 (strain JL03).